Here is a 211-residue protein sequence, read N- to C-terminus: Endoplasmic reticulum vesicle protein 25 (211 aa).

The first 19 residues, 1-19, serve as a signal peptide directing secretion; the sequence is MKSIVSVLTLLLLINAVAA. Over 20-180 the chain is Lumenal; that stretch reads LRFVLPAKDK…TNESTNRRVK (161 aa). The region spanning 33-121 is the GOLD domain; the sequence is PFCVRDFVKN…TKEIDLSVAI (89 aa). A helical transmembrane segment spans residues 181–201; it reads FFSVGITLALIALGVWQIIYL. The Cytoplasmic portion of the chain corresponds to 202 to 211; it reads RSYFRSKHII.

The protein belongs to the EMP24/GP25L family.

The protein localises to the endoplasmic reticulum membrane. The protein resides in the golgi apparatus membrane. Functionally, constituent of COPII-coated endoplasmic reticulum-derived transport vesicles. Required for efficient transport of a subset of secretory proteins to the Golgi. Facilitates retrograde transport from the Golgi to the endoplasmic reticulum. This Yarrowia lipolytica (strain CLIB 122 / E 150) (Yeast) protein is Endoplasmic reticulum vesicle protein 25 (ERV25).